A 181-amino-acid polypeptide reads, in one-letter code: Ribulose bisphosphate carboxylase small subunit 3B, chloroplastic (181 aa).

A chloroplast-targeting transit peptide spans 1–54 (MASSMLSSAAVVTSPAQATMVAPFTGLKSSAAFPVTRKTNKDITSIASNGGRVS).

The protein belongs to the RuBisCO small chain family. In terms of assembly, heterohexadecamer of 8 large and 8 small subunits.

The protein localises to the plastid. It localises to the chloroplast. In terms of biological role, ruBisCO catalyzes two reactions: the carboxylation of D-ribulose 1,5-bisphosphate, the primary event in carbon dioxide fixation, as well as the oxidative fragmentation of the pentose substrate. Both reactions occur simultaneously and in competition at the same active site. Although the small subunit is not catalytic it is essential for maximal activity. The chain is Ribulose bisphosphate carboxylase small subunit 3B, chloroplastic (RBCS-3B) from Arabidopsis thaliana (Mouse-ear cress).